Reading from the N-terminus, the 341-residue chain is Acetylpolyamine amidohydrolase (341 aa).

Residue His-157 is the Proton donor/acceptor of the active site. Zn(2+) contacts are provided by Asp-192, His-194, and Asp-281.

It belongs to the histone deacetylase family. As to quaternary structure, homodimer. Zn(2+) is required as a cofactor.

The enzyme catalyses N-acetylputrescine + H2O = putrescine + acetate. It catalyses the reaction N-acetylcadaverine + H2O = cadaverine + acetate. It functions in the pathway amine and polyamine metabolism. In terms of biological role, involved in polyamine metabolism. Catalyzes the deacetylation of various acetylated polyamines such as N-acetylputrescine and N-acetylcadaverine. The sequence is that of Acetylpolyamine amidohydrolase from Burkholderia pseudomallei (strain 1710b).